The chain runs to 387 residues: WD repeat-containing protein 89 (387 aa).

WD repeat units lie at residues 21-65 (KEPT…VLRE), 68-107 (GYPGLLNGVRFANSCDSVYSACTDGTVKCWDARVAREKPV), 112-156 (GYPS…QDLS), 168-208 (THSD…EEDA), 214-254 (NSIS…TDEP), and 319-358 (GHAATVRSFCWNVQDDSLLTGGEDAQLLLWKPGAIEKTFT).

The polypeptide is WD repeat-containing protein 89 (WDR89) (Pongo abelii (Sumatran orangutan)).